A 448-amino-acid chain; its full sequence is Exodeoxyribonuclease 7 large subunit (448 aa).

Belongs to the XseA family. Heterooligomer composed of large and small subunits.

The protein resides in the cytoplasm. The enzyme catalyses Exonucleolytic cleavage in either 5'- to 3'- or 3'- to 5'-direction to yield nucleoside 5'-phosphates.. Its function is as follows. Bidirectionally degrades single-stranded DNA into large acid-insoluble oligonucleotides, which are then degraded further into small acid-soluble oligonucleotides. This is Exodeoxyribonuclease 7 large subunit from Shewanella baltica (strain OS223).